A 489-amino-acid chain; its full sequence is Betaine aldehyde dehydrogenase (489 aa).

2 residues coordinate K(+): Thr26 and Asp93. Residue Gly150 to Trp152 participates in NAD(+) binding. The active-site Charge relay system is the Lys162. Lys176–Glu179 serves as a coordination point for NAD(+). Val180 lines the K(+) pocket. Gly229 to Thr232 is a binding site for NAD(+). Leu245 is a K(+) binding site. The active-site Proton acceptor is the Glu251. Positions 253, 285, and 386 each coordinate NAD(+). Cys285 acts as the Nucleophile in catalysis. The residue at position 285 (Cys285) is a Cysteine sulfenic acid (-SOH). K(+) is bound by residues Lys456 and Gly459. Catalysis depends on Glu463, which acts as the Charge relay system.

This sequence belongs to the aldehyde dehydrogenase family. Dimer of dimers. The cofactor is K(+).

It carries out the reaction betaine aldehyde + NAD(+) + H2O = glycine betaine + NADH + 2 H(+). It participates in amine and polyamine biosynthesis; betaine biosynthesis via choline pathway; betaine from betaine aldehyde: step 1/1. In terms of biological role, involved in the biosynthesis of the osmoprotectant glycine betaine. Catalyzes the irreversible oxidation of betaine aldehyde to the corresponding acid. The sequence is that of Betaine aldehyde dehydrogenase from Burkholderia ambifaria (strain MC40-6).